The following is a 151-amino-acid chain: Methylated-DNA--protein-cysteine methyltransferase (151 aa).

Cys-119 serves as the catalytic Nucleophile; methyl group acceptor.

Belongs to the MGMT family.

It is found in the cytoplasm. The enzyme catalyses a 6-O-methyl-2'-deoxyguanosine in DNA + L-cysteinyl-[protein] = S-methyl-L-cysteinyl-[protein] + a 2'-deoxyguanosine in DNA. The catalysed reaction is a 4-O-methyl-thymidine in DNA + L-cysteinyl-[protein] = a thymidine in DNA + S-methyl-L-cysteinyl-[protein]. Functionally, involved in the cellular defense against the biological effects of O6-methylguanine (O6-MeG) and O4-methylthymine (O4-MeT) in DNA. Repairs the methylated nucleobase in DNA by stoichiometrically transferring the methyl group to a cysteine residue in the enzyme. This is a suicide reaction: the enzyme is irreversibly inactivated. This Saccharolobus islandicus (strain Y.N.15.51 / Yellowstone #2) (Sulfolobus islandicus) protein is Methylated-DNA--protein-cysteine methyltransferase.